The primary structure comprises 203 residues: Ras-related protein Rab-18 (203 aa).

GTP-binding residues include serine 20, glycine 23, lysine 24, serine 25, serine 26, aspartate 37, proline 38, threonine 43, glycine 69, lysine 126, aspartate 128, and alanine 155. The Effector region motif lies at 40–48 (QAATIGVDF). Residues cysteine 201 and cysteine 203 are each lipidated (S-geranylgeranyl cysteine). Cysteine 203 is subject to Cysteine methyl ester.

Belongs to the small GTPase superfamily. Rab family.

It carries out the reaction GTP + H2O = GDP + phosphate + H(+). The small GTPases Rab are key regulators of intracellular membrane trafficking, from the formation of transport vesicles to their fusion with membranes. Rabs cycle between an inactive GDP-bound form and an active GTP-bound form that is able to recruit to membranes different sets of downstream effectors directly responsible for vesicle formation, movement, tethering and fusion. Plays a role in apical endocytosis/recycling. May be implicated in transport between the plasma membrane and early endosomes. Plays a role in the shedding of pathogen spores from intestinal cells. The protein is Ras-related protein Rab-18 (rab-18) of Caenorhabditis elegans.